Reading from the N-terminus, the 63-residue chain is Anionic peptide 10.1 (63 aa).

Positions 1-20 (MISRFCLLFLLVFVVSKIQA) are cleaved as a signal peptide.

The protein belongs to the non-disulfide-bridged peptide (NDBP) superfamily. Long chain multifunctional peptide (group 2) family. In terms of tissue distribution, expressed by the venom gland.

Its subcellular location is the secreted. This is Anionic peptide 10.1 from Lychas mucronatus (Chinese swimming scorpion).